A 405-amino-acid chain; its full sequence is Acetylornithine/succinyldiaminopimelate aminotransferase (405 aa).

Residues 108-109 (GT) and Phe-141 each bind pyridoxal 5'-phosphate. Position 144 (Arg-144) interacts with N(2)-acetyl-L-ornithine. 226–229 (DEVQ) serves as a coordination point for pyridoxal 5'-phosphate. Residue Lys-255 is modified to N6-(pyridoxal phosphate)lysine. Position 283 (Ser-283) interacts with N(2)-acetyl-L-ornithine. Residue Thr-284 participates in pyridoxal 5'-phosphate binding.

It belongs to the class-III pyridoxal-phosphate-dependent aminotransferase family. ArgD subfamily. Homodimer. Pyridoxal 5'-phosphate is required as a cofactor.

It localises to the cytoplasm. The enzyme catalyses N(2)-acetyl-L-ornithine + 2-oxoglutarate = N-acetyl-L-glutamate 5-semialdehyde + L-glutamate. It carries out the reaction N-succinyl-(2S,6S)-2,6-diaminopimelate + 2-oxoglutarate = (S)-2-succinylamino-6-oxoheptanedioate + L-glutamate. It functions in the pathway amino-acid biosynthesis; L-arginine biosynthesis; N(2)-acetyl-L-ornithine from L-glutamate: step 4/4. It participates in amino-acid biosynthesis; L-lysine biosynthesis via DAP pathway; LL-2,6-diaminopimelate from (S)-tetrahydrodipicolinate (succinylase route): step 2/3. Inhibited by gabaculine (Gcn). Involved in both the arginine and lysine biosynthetic pathways. The sequence is that of Acetylornithine/succinyldiaminopimelate aminotransferase from Salmonella typhimurium (strain LT2 / SGSC1412 / ATCC 700720).